A 537-amino-acid polypeptide reads, in one-letter code: Probable protein kinase UbiB (537 aa).

The chain crosses the membrane as a helical span at residues 30 to 47 (LLPWWLRALGYLLPWRWL). The region spanning 126 to 490 (RFDSEPLASA…KRERHDHHLL (365 aa)) is the Protein kinase domain. ATP contacts are provided by residues 132–140 (LASASVAQV) and K154. D289 functions as the Proton acceptor in the catalytic mechanism. Transmembrane regions (helical) follow at residues 489–507 (LLRLLGAALLAGGVLLALQ) and 513–530 (ANAWPSWLMLASGLYLLV).

The protein belongs to the ABC1 family. UbiB subfamily.

It is found in the cell inner membrane. It functions in the pathway cofactor biosynthesis; ubiquinone biosynthesis [regulation]. Is probably a protein kinase regulator of UbiI activity which is involved in aerobic coenzyme Q (ubiquinone) biosynthesis. This chain is Probable protein kinase UbiB, found in Azotobacter vinelandii (strain DJ / ATCC BAA-1303).